The chain runs to 168 residues: 2-C-methyl-D-erythritol 2,4-cyclodiphosphate synthase (168 aa).

A divalent metal cation-binding residues include D13 and H15. 4-CDP-2-C-methyl-D-erythritol 2-phosphate-binding positions include 13 to 15 (DVH) and 39 to 40 (HS). Residue H47 coordinates a divalent metal cation. Residues 61–63 (DIG), 66–70 (FPDTD), F144, and K147 each bind 4-CDP-2-C-methyl-D-erythritol 2-phosphate.

Belongs to the IspF family. Homotrimer. A divalent metal cation is required as a cofactor.

It catalyses the reaction 4-CDP-2-C-methyl-D-erythritol 2-phosphate = 2-C-methyl-D-erythritol 2,4-cyclic diphosphate + CMP. It functions in the pathway isoprenoid biosynthesis; isopentenyl diphosphate biosynthesis via DXP pathway; isopentenyl diphosphate from 1-deoxy-D-xylulose 5-phosphate: step 4/6. Functionally, involved in the biosynthesis of isopentenyl diphosphate (IPP) and dimethylallyl diphosphate (DMAPP), two major building blocks of isoprenoid compounds. Catalyzes the conversion of 4-diphosphocytidyl-2-C-methyl-D-erythritol 2-phosphate (CDP-ME2P) to 2-C-methyl-D-erythritol 2,4-cyclodiphosphate (ME-CPP) with a corresponding release of cytidine 5-monophosphate (CMP). The chain is 2-C-methyl-D-erythritol 2,4-cyclodiphosphate synthase from Ralstonia pickettii (strain 12J).